The sequence spans 353 residues: Keratocan (353 aa).

Residues methionine 1–threonine 21 form the signal peptide. One can recognise an LRRNT domain in the interval glutamate 34–alanine 72. Disulfide bonds link cysteine 43/cysteine 49 and cysteine 47/cysteine 59. 8 LRR repeats span residues arginine 73–asparagine 94, histidine 97–leucine 118, arginine 123–valine 143, glycine 144–asparagine 165, asparagine 168–threonine 188, serine 194–alanine 214, asparagine 215–alanine 236, and lysine 239–glycine 259. Asparagine 94 carries N-linked (GlcNAc...) (keratan sulfate) asparagine glycosylation. The N-linked (GlcNAc...) asparagine glycan is linked to asparagine 168. A glycan (N-linked (GlcNAc...) (keratan sulfate) asparagine) is linked at asparagine 223. Asparagine 261 carries N-linked (GlcNAc...) (keratan sulfate) asparagine glycosylation. 2 LRR repeats span residues serine 264–alanine 283 and histidine 284–proline 305. Asparagine 299 is a glycosylation site (N-linked (GlcNAc...) asparagine). A disulfide bridge links cysteine 304 with cysteine 344.

Belongs to the small leucine-rich proteoglycan (SLRP) family. SLRP class II subfamily. In terms of tissue distribution, cornea.

It is found in the secreted. It localises to the extracellular space. Its subcellular location is the extracellular matrix. Plays an important role in generating and maintaining a transparent matrix within the corneal stroma. This chain is Keratocan (KERA), found in Coturnix japonica (Japanese quail).